A 694-amino-acid chain; its full sequence is Putative serine/threonine-protein kinase R679 (694 aa).

The 382-residue stretch at I167–T548 folds into the Protein kinase domain. Residues V173–A181 and K196 each bind ATP. D395 functions as the Proton acceptor in the catalytic mechanism.

It belongs to the protein kinase superfamily. Ser/Thr protein kinase family.

It localises to the virion. It carries out the reaction L-seryl-[protein] + ATP = O-phospho-L-seryl-[protein] + ADP + H(+). The enzyme catalyses L-threonyl-[protein] + ATP = O-phospho-L-threonyl-[protein] + ADP + H(+). The polypeptide is Putative serine/threonine-protein kinase R679 (Acanthamoeba polyphaga (Amoeba)).